Reading from the N-terminus, the 198-residue chain is ATP-dependent Clp protease proteolytic subunit (198 aa).

Ser103 serves as the catalytic Nucleophile. His128 is a catalytic residue.

Belongs to the peptidase S14 family. Fourteen ClpP subunits assemble into 2 heptameric rings which stack back to back to give a disk-like structure with a central cavity, resembling the structure of eukaryotic proteasomes.

The protein resides in the cytoplasm. The catalysed reaction is Hydrolysis of proteins to small peptides in the presence of ATP and magnesium. alpha-casein is the usual test substrate. In the absence of ATP, only oligopeptides shorter than five residues are hydrolyzed (such as succinyl-Leu-Tyr-|-NHMec, and Leu-Tyr-Leu-|-Tyr-Trp, in which cleavage of the -Tyr-|-Leu- and -Tyr-|-Trp bonds also occurs).. Cleaves peptides in various proteins in a process that requires ATP hydrolysis. Has a chymotrypsin-like activity. Plays a major role in the degradation of misfolded proteins. In Vesicomyosocius okutanii subsp. Calyptogena okutanii (strain HA), this protein is ATP-dependent Clp protease proteolytic subunit.